The primary structure comprises 210 residues: Fibroblast growth factor 21 (210 aa).

Positions 1–28 are cleaved as a signal peptide; that stretch reads MEWMRSRVGTLGLWVRLLLAVFLLGVYQ. The tract at residues 144-210 is disordered; sequence PLRLPQKDSP…LQGRSPSYAS (67 aa).

It belongs to the heparin-binding growth factors family. In terms of assembly, interacts (via C-terminus) with KLB; this interaction is direct. Interacts with FGFR4. In terms of tissue distribution, most abundantly expressed in the liver, also expressed in the thymus at lower levels. Expressed in skeletal muscle (at protein level). Secreted in plasma (at protein level).

It is found in the secreted. Stimulates glucose uptake in differentiated adipocytes via the induction of glucose transporter SLC2A1/GLUT1 expression (but not SLC2A4/GLUT4 expression). Activity probably requires the presence of KLB. Regulates systemic glucose homeostasis and insulin sensitivity. This is Fibroblast growth factor 21 (Fgf21) from Mus musculus (Mouse).